The sequence spans 83 residues: U-actitoxin-Avd8d (83 aa).

The first 19 residues, Met1–Gln19, serve as a signal peptide directing secretion. The propeptide occupies Val20–Thr38.

The protein belongs to the sea anemone 8 toxin family.

The protein localises to the secreted. It is found in the nematocyst. The protein is U-actitoxin-Avd8d of Anemonia viridis (Snakelocks anemone).